A 104-amino-acid polypeptide reads, in one-letter code: DNA-directed RNA polymerase subunit omega (104 aa).

The protein belongs to the RNA polymerase subunit omega family. The RNAP catalytic core consists of 2 alpha, 1 beta, 1 beta' and 1 omega subunit. When a sigma factor is associated with the core the holoenzyme is formed, which can initiate transcription.

It catalyses the reaction RNA(n) + a ribonucleoside 5'-triphosphate = RNA(n+1) + diphosphate. Its function is as follows. Promotes RNA polymerase assembly. Latches the N- and C-terminal regions of the beta' subunit thereby facilitating its interaction with the beta and alpha subunits. The protein is DNA-directed RNA polymerase subunit omega of Streptococcus thermophilus (strain CNRZ 1066).